Reading from the N-terminus, the 304-residue chain is dTDP-4-dehydrorhamnose reductase (304 aa).

NADH contacts are provided by residues 16–18 (GML), 42–43 (DI), and 66–68 (AWT). Residues 17-18 (ML), 42-43 (DI), and 66-68 (AWT) contribute to the NADPH site. Residue 107–108 (TD) coordinates dTDP-beta-L-rhamnose. Tyrosine 131 and lysine 135 together coordinate NADH. NADPH is bound by residues tyrosine 131 and lysine 135. The Proton donor/acceptor role is filled by tyrosine 131. Tryptophan 157 lines the dTDP-beta-L-rhamnose pocket.

The protein belongs to the dTDP-4-dehydrorhamnose reductase family. As to quaternary structure, homodimer. The cofactor is Mg(2+).

The enzyme catalyses dTDP-beta-L-rhamnose + NADP(+) = dTDP-4-dehydro-beta-L-rhamnose + NADPH + H(+). It participates in carbohydrate biosynthesis; dTDP-L-rhamnose biosynthesis. Its pathway is antibiotic biosynthesis; streptomycin biosynthesis. Its function is as follows. Involved in the biosynthesis of the streptose moiety of streptomycin. Catalyzes the reduction of dTDP-6-deoxy-L-lyxo-4-hexulose to yield dTDP-L-rhamnose. RmlD uses NADH and NADPH nearly equally well. The protein is dTDP-4-dehydrorhamnose reductase of Streptomyces griseus.